Consider the following 455-residue polypeptide: Probable xyloglucan galactosyltransferase GT17 (455 aa).

Residues 1–34 are Cytoplasmic-facing; it reads MTFNKRQVKINHWPEKNDKEKQKYSKNRETVKLT. Residues 35–55 form a helical; Signal-anchor for type II membrane protein membrane-spanning segment; that stretch reads LLTLLLLCSICFLFLTLNFPF. Over 56 to 455 the chain is Lumenal; it reads TIEFTASIPR…QARDNVVVSL (400 aa). N-linked (GlcNAc...) asparagine glycans are attached at residues Asn-70, Asn-169, Asn-230, Asn-390, and Asn-426.

The protein belongs to the glycosyltransferase 47 family. As to expression, expressed in roots and hypocotyls.

The protein resides in the golgi apparatus membrane. In terms of biological role, functions in xyloglucan synthesis by adding side chains to the xylosylated glucan backbone. Involved in the galactosylation of hemicellulose xyloglucan. This chain is Probable xyloglucan galactosyltransferase GT17, found in Arabidopsis thaliana (Mouse-ear cress).